Consider the following 78-residue polypeptide: Large ribosomal subunit protein bL28 (78 aa).

This sequence belongs to the bacterial ribosomal protein bL28 family.

The chain is Large ribosomal subunit protein bL28 from Acaryochloris marina (strain MBIC 11017).